Here is a 339-residue protein sequence, read N- to C-terminus: DNA-directed RNA polymerase subunit alpha (339 aa).

An alpha N-terminal domain (alpha-NTD) region spans residues 1-235 (MVIQKNWQEL…DQLQIFVNFE (235 aa)). Residues 251–339 (FNPALLKKVD…DLAKRFEEHY (89 aa)) are alpha C-terminal domain (alpha-CTD).

This sequence belongs to the RNA polymerase alpha chain family. In terms of assembly, homodimer. The RNAP catalytic core consists of 2 alpha, 1 beta, 1 beta' and 1 omega subunit. When a sigma factor is associated with the core the holoenzyme is formed, which can initiate transcription.

It catalyses the reaction RNA(n) + a ribonucleoside 5'-triphosphate = RNA(n+1) + diphosphate. DNA-dependent RNA polymerase catalyzes the transcription of DNA into RNA using the four ribonucleoside triphosphates as substrates. In Methylobacterium nodulans (strain LMG 21967 / CNCM I-2342 / ORS 2060), this protein is DNA-directed RNA polymerase subunit alpha.